We begin with the raw amino-acid sequence, 373 residues long: UDP-N-acetylglucosamine--N-acetylmuramyl-(pentapeptide) pyrophosphoryl-undecaprenol N-acetylglucosamine transferase (373 aa).

UDP-N-acetyl-alpha-D-glucosamine is bound by residues Thr-14–Gly-16, Asn-128, Arg-165, Ser-199, and Gln-295.

It belongs to the glycosyltransferase 28 family. MurG subfamily.

It localises to the cell membrane. The enzyme catalyses di-trans,octa-cis-undecaprenyl diphospho-N-acetyl-alpha-D-muramoyl-L-alanyl-D-glutamyl-meso-2,6-diaminopimeloyl-D-alanyl-D-alanine + UDP-N-acetyl-alpha-D-glucosamine = di-trans,octa-cis-undecaprenyl diphospho-[N-acetyl-alpha-D-glucosaminyl-(1-&gt;4)]-N-acetyl-alpha-D-muramoyl-L-alanyl-D-glutamyl-meso-2,6-diaminopimeloyl-D-alanyl-D-alanine + UDP + H(+). Its pathway is cell wall biogenesis; peptidoglycan biosynthesis. In terms of biological role, cell wall formation. Catalyzes the transfer of a GlcNAc subunit on undecaprenyl-pyrophosphoryl-MurNAc-pentapeptide (lipid intermediate I) to form undecaprenyl-pyrophosphoryl-MurNAc-(pentapeptide)GlcNAc (lipid intermediate II). The sequence is that of UDP-N-acetylglucosamine--N-acetylmuramyl-(pentapeptide) pyrophosphoryl-undecaprenol N-acetylglucosamine transferase from Mycobacterium sp. (strain KMS).